Here is a 203-residue protein sequence, read N- to C-terminus: Recombination protein RecR (203 aa).

The C4-type zinc finger occupies 56 to 71 (CAVCGNVSDNERCRIC). The Toprim domain maps to 79–179 (SVVCIVEEPK…TVTRIASGLP (101 aa)).

This sequence belongs to the RecR family.

In terms of biological role, may play a role in DNA repair. It seems to be involved in an RecBC-independent recombinational process of DNA repair. It may act with RecF and RecO. The polypeptide is Recombination protein RecR (Mycobacterium bovis (strain ATCC BAA-935 / AF2122/97)).